We begin with the raw amino-acid sequence, 141 residues long: uncharacterized protein (141 aa).

The Ferritin-like diiron domain occupies 13 to 141 (VTKGTELEKE…LKGILDRYFK (129 aa)). Fe cation is bound by residues Glu63, His66, Glu125, and His128.

This is an uncharacterized protein from Methanocaldococcus jannaschii (strain ATCC 43067 / DSM 2661 / JAL-1 / JCM 10045 / NBRC 100440) (Methanococcus jannaschii).